The following is a 226-amino-acid chain: RNA pyrophosphohydrolase (226 aa).

Positions glycine 6–threonine 149 constitute a Nudix hydrolase domain. A Nudix box motif is present at residues glycine 38 to glycine 59. Residues methionine 197–glycine 226 form a disordered region.

The protein belongs to the Nudix hydrolase family. RppH subfamily. Requires a divalent metal cation as cofactor.

In terms of biological role, accelerates the degradation of transcripts by removing pyrophosphate from the 5'-end of triphosphorylated RNA, leading to a more labile monophosphorylated state that can stimulate subsequent ribonuclease cleavage. The protein is RNA pyrophosphohydrolase of Paracidovorax citrulli (strain AAC00-1) (Acidovorax citrulli).